Consider the following 255-residue polypeptide: Hemin import ATP-binding protein HmuV (255 aa).

The ABC transporter domain maps to Leu-2–Glu-238. Gly-34–Ser-41 lines the ATP pocket.

This sequence belongs to the ABC transporter superfamily. Heme (hemin) importer (TC 3.A.1.14.5) family. The complex is composed of two ATP-binding proteins (HmuV), two transmembrane proteins (HmuU) and a solute-binding protein (HmuT).

The protein resides in the cell inner membrane. In terms of biological role, part of the ABC transporter complex HmuTUV involved in hemin import. Responsible for energy coupling to the transport system. In Pseudomonas aeruginosa (strain ATCC 15692 / DSM 22644 / CIP 104116 / JCM 14847 / LMG 12228 / 1C / PRS 101 / PAO1), this protein is Hemin import ATP-binding protein HmuV.